Reading from the N-terminus, the 332-residue chain is Ribosomal RNA small subunit methyltransferase C (332 aa).

The protein belongs to the methyltransferase superfamily. RsmC family. As to quaternary structure, monomer.

It localises to the cytoplasm. The catalysed reaction is guanosine(1207) in 16S rRNA + S-adenosyl-L-methionine = N(2)-methylguanosine(1207) in 16S rRNA + S-adenosyl-L-homocysteine + H(+). Its function is as follows. Specifically methylates the guanine in position 1207 of 16S rRNA in the 30S particle. This Pseudomonas aeruginosa (strain UCBPP-PA14) protein is Ribosomal RNA small subunit methyltransferase C.